The chain runs to 254 residues: Bax inhibitor 1 homolog (254 aa).

At M1–V43 the chain is on the cytoplasmic side. A helical membrane pass occupies residues Y44–I64. The Lumenal portion of the chain corresponds to Y65–R66. A helical membrane pass occupies residues P67–P87. Residues R88–R98 are Cytoplasmic-facing. The chain crosses the membrane as a helical span at residues F99 to L119. Residues Y120–S126 lie on the Lumenal side of the membrane. The chain crosses the membrane as a helical span at residues I127–L147. At L148 to R152 the chain is on the cytoplasmic side. The chain crosses the membrane as a helical span at residues L153–L173. Over T174–L187 the chain is Lumenal. A helical membrane pass occupies residues F188–V208. Residues H209 to K217 are Cytoplasmic-facing. The helical intramembrane region spans D218 to L238. The Cytoplasmic portion of the chain corresponds to K239–R254.

The protein belongs to the BI1 family.

Its subcellular location is the endoplasmic reticulum membrane. This Dictyostelium discoideum (Social amoeba) protein is Bax inhibitor 1 homolog.